Reading from the N-terminus, the 583-residue chain is MSKKARFGVVLVVLAACSGFLFPTLQWYFLTDAQTRQRALSSREQIKEYAVQSAERDLADLTRLARAGSDEDISARYAPLVAAARQNLSYSGRPAPSRWTAAALVSAFPVKSEQGFVLYARPLMEQTYREAVLKMKRRQAQAVKLGLDLSGGTSVVIKADLSEVTKGVPDAERAAIRSEAMALVLSTLENRINRFGLSEPVIRRQGEDRVYVEIPGLTDRDRVHSIVMGRGVLAFHLVDDDATQKLLDHYRNNPQGTFDAAHQLHDLSLVPEHTSVLGVYRKDSYGLDVRDGFLVVKKEPALEGRHIRDATVSSGRANEPLVLFDLDHEGARIFSELTTKEIGRRLAIVSDGKIRSAPAIREPITAGSGSISGFSAEEAQNLKTALRSAWLNVALEIENQQVVGASMGEESIRQGTRALVWGLCAVLLFMLVWYQEAGVNACVAQLLNLYIMFGVLSAFNLTLTLSSIAGMILTIGMAVDANVVVFERIREELALGKSRGAAVCSGFERAFWAIMDSNVTTFIAALFLSVLGTGPIKGFAYSLAIGVVSSVFTALFVSRLMFDYGTEVLHKKTVRIGWRIARV.

The next 6 membrane-spanning stretches (helical) occupy residues Phe-7 to Trp-27, Leu-419 to Val-439, Leu-446 to Ile-468, Ala-469 to Ile-489, Phe-511 to Leu-531, and Gly-538 to Ser-558.

Belongs to the SecD/SecF family. SecD subfamily. As to quaternary structure, forms a complex with SecF. Part of the essential Sec protein translocation apparatus which comprises SecA, SecYEG and auxiliary proteins SecDF. Other proteins may also be involved.

The protein localises to the cell inner membrane. Functionally, part of the Sec protein translocase complex. Interacts with the SecYEG preprotein conducting channel. SecDF uses the proton motive force (PMF) to complete protein translocation after the ATP-dependent function of SecA. This chain is Protein translocase subunit SecD, found in Treponema pallidum (strain Nichols).